Here is a 147-residue protein sequence, read N- to C-terminus: Hemoglobin subunit epsilon (147 aa).

A Globin domain is found at 3-147 (HFTAEEKSTI…VATALAHKYH (145 aa)). A phosphoserine mark is found at Ser-14 and Ser-51. His-64 and His-93 together coordinate heme b.

The protein belongs to the globin family. Heterotetramer of two alpha chains and two epsilon chains in early embryonic hemoglobin Gower-2; two zeta chains and two epsilon chains in early embryonic hemoglobin Gower-1. As to expression, red blood cells.

In terms of biological role, the epsilon chain is a beta-type chain of early mammalian embryonic hemoglobin. The chain is Hemoglobin subunit epsilon (HBE1) from Eulemur fulvus fulvus (Brown lemur).